We begin with the raw amino-acid sequence, 83 residues long: Small ribosomal subunit protein bS16 (83 aa).

Belongs to the bacterial ribosomal protein bS16 family.

This is Small ribosomal subunit protein bS16 from Shewanella woodyi (strain ATCC 51908 / MS32).